The sequence spans 260 residues: 3'-5' ssDNA/RNA exonuclease TatD (260 aa).

Residues E92, H128, and H153 each contribute to the a divalent metal cation site.

It belongs to the metallo-dependent hydrolases superfamily. TatD-type hydrolase family. TatD subfamily. Monomer. Requires Mg(2+) as cofactor.

Its subcellular location is the cytoplasm. 3'-5' exonuclease that prefers single-stranded DNA and RNA. May play a role in the H(2)O(2)-induced DNA damage repair. The polypeptide is 3'-5' ssDNA/RNA exonuclease TatD (Edwardsiella piscicida).